Reading from the N-terminus, the 294-residue chain is tRNA pseudouridine synthase B (294 aa).

The Nucleophile role is filled by aspartate 38.

This sequence belongs to the pseudouridine synthase TruB family. Type 1 subfamily.

It catalyses the reaction uridine(55) in tRNA = pseudouridine(55) in tRNA. In terms of biological role, responsible for synthesis of pseudouridine from uracil-55 in the psi GC loop of transfer RNAs. This Clostridium perfringens (strain 13 / Type A) protein is tRNA pseudouridine synthase B.